Reading from the N-terminus, the 492-residue chain is MKPVVALVGRPNVGKSTLFNRITRSRNALVDDFPGVTRDRHYVDAVWNERPFTLVDTGGFLLSDDDFFAREIRGHVELAIEDADIVALVLDGRAGISPFDRDLADILRRTSKPVFFLVNKVENHKQREELLEFYSLGIEKFYPMSAEHGIGVEPFLDDMVALFPAPEPVVEPQAGSEQGEPDASEQEICIAVAGRPNVGKSSLINRLFGKSRVVVSHVPGTTRDSVDLSIERNGRRFRLIDTAGIRRKGKVRERIEKYSILKSLKSLDQCDVALILIDADEGVTDQDITIAGYAQDRGCGALFLINKWDLLDEDRKDQRRFMEDLRTKSKFLSFAPAMTISALTGFRTHKILAMVEKIHAQYAYRINTGLLNRIVEDAIFRSEPPMHKGKRLKFFYATQVAVKPPTIVCFVNYPDAVHFSYHRYLVNQIREMAELEHTPIRLLFRAKTGKIDFSGKSKLAERIVEKKEKKTTRRKKERKEQSRRKRVRDLKG.

EngA-type G domains follow at residues 3–167 (PVVA…PAPE) and 188–363 (ICIA…AQYA). GTP contacts are provided by residues 9–16 (GRPNVGKS), 56–60 (DTGGF), 119–122 (NKVE), 194–201 (GRPNVGKS), 241–245 (DTAGI), and 306–309 (NKWD). The KH-like domain occupies 364–448 (YRINTGLLNR…PIRLLFRAKT (85 aa)). Positions 464 to 492 (VEKKEKKTTRRKKERKEQSRRKRVRDLKG) are disordered. The span at 469–492 (KKTTRRKKERKEQSRRKRVRDLKG) shows a compositional bias: basic residues.

Belongs to the TRAFAC class TrmE-Era-EngA-EngB-Septin-like GTPase superfamily. EngA (Der) GTPase family. In terms of assembly, associates with the 50S ribosomal subunit.

Its function is as follows. GTPase that plays an essential role in the late steps of ribosome biogenesis. This is GTPase Der from Desulforapulum autotrophicum (strain ATCC 43914 / DSM 3382 / VKM B-1955 / HRM2) (Desulfobacterium autotrophicum).